The chain runs to 82 residues: Precursor of CEP3 (82 aa).

The signal sequence occupies residues 1–24 (MATINVYVFAFIFLLTISVGSIEG). The propeptide occupies 25–63 (RKLTKFTVTTSEEIRAGGSVLSSSPPTEPLESPPSHGVD). The tract at residues 40-82 (AGGSVLSSSPPTEPLESPPSHGVDTFRPTEPGHSPGIGHSVHN) is disordered. Proline 67, proline 70, and proline 74 each carry hydroxyproline. Positions 79 to 82 (SVHN) are excised as a propeptide.

This sequence belongs to the C-terminally encoded plant signaling peptide (CEP) family. Interacts with the CEP receptor CEPR1. Post-translationally, the mature small signaling peptide is generated by proteolytic processing of the longer precursor. As to expression, mostly expressed in roots. Present in lateral roots (especially in vasculature), root-hypocotyl junction and cotyledons.

The protein resides in the secreted. It localises to the extracellular space. It is found in the apoplast. Extracellular signaling peptide that represses primary root growth rate and significantly inhibits lateral root formation. Promotes shoot growth. Modulates leaf morphology. Regulates systemic nitrogen (N)-demand signaling. Mediates systemic up-regulation of genes involved in N uptake and assimilation pathways. In Arabidopsis thaliana (Mouse-ear cress), this protein is Precursor of CEP3.